The sequence spans 265 residues: MPTWLASPDDPLPDTRHALPAGSEVPGLVAAGTDLSPRRLAEAYARGIFPWYSAGQPVLWWSPDPRMVLPVAEFKLSHSLRKTLRRFSAAPHCEVRIDHDFAAVIHACATTPREGQDGTWIQPELQAAYTEWHRLGAVHSFETWVDGRLLGGLYGVNLGRMFFGESMFSHATDASKIALAALVAFCRANDIALIDCQQRTAHLGSLGAREIDRPAFEGHLARTVAQRPPEDWTYHRSHWTQLRLDTGPDPASSSVTEISLRPAAP.

Positions 244–265 are disordered; sequence LDTGPDPASSSVTEISLRPAAP.

Belongs to the L/F-transferase family.

It localises to the cytoplasm. The catalysed reaction is N-terminal L-lysyl-[protein] + L-leucyl-tRNA(Leu) = N-terminal L-leucyl-L-lysyl-[protein] + tRNA(Leu) + H(+). It catalyses the reaction N-terminal L-arginyl-[protein] + L-leucyl-tRNA(Leu) = N-terminal L-leucyl-L-arginyl-[protein] + tRNA(Leu) + H(+). The enzyme catalyses L-phenylalanyl-tRNA(Phe) + an N-terminal L-alpha-aminoacyl-[protein] = an N-terminal L-phenylalanyl-L-alpha-aminoacyl-[protein] + tRNA(Phe). In terms of biological role, functions in the N-end rule pathway of protein degradation where it conjugates Leu, Phe and, less efficiently, Met from aminoacyl-tRNAs to the N-termini of proteins containing an N-terminal arginine or lysine. This Methylibium petroleiphilum (strain ATCC BAA-1232 / LMG 22953 / PM1) protein is Leucyl/phenylalanyl-tRNA--protein transferase.